Consider the following 162-residue polypeptide: Ribonuclease H (162 aa).

The RNase H type-1 domain occupies 1 to 141 (MKRIEIFTDG…ADALARAGMA (141 aa)). Positions 9, 47, 69, and 133 each coordinate Mg(2+). Residues 139–162 (GMAPFKKKKGGDTASSEEGSARRR) are disordered.

This sequence belongs to the RNase H family. In terms of assembly, monomer. Requires Mg(2+) as cofactor.

The protein resides in the cytoplasm. The catalysed reaction is Endonucleolytic cleavage to 5'-phosphomonoester.. Endonuclease that specifically degrades the RNA of RNA-DNA hybrids. In Chelativorans sp. (strain BNC1), this protein is Ribonuclease H.